The sequence spans 602 residues: Elongation factor 4 (602 aa).

The 183-residue stretch at 7 to 189 (RKIRNFSIIA…AIVKNIPPPT (183 aa)) folds into the tr-type G domain. GTP-binding positions include 19–24 (DHGKST) and 136–139 (NKID).

The protein belongs to the TRAFAC class translation factor GTPase superfamily. Classic translation factor GTPase family. LepA subfamily.

It localises to the cell membrane. It catalyses the reaction GTP + H2O = GDP + phosphate + H(+). Its function is as follows. Required for accurate and efficient protein synthesis under certain stress conditions. May act as a fidelity factor of the translation reaction, by catalyzing a one-codon backward translocation of tRNAs on improperly translocated ribosomes. Back-translocation proceeds from a post-translocation (POST) complex to a pre-translocation (PRE) complex, thus giving elongation factor G a second chance to translocate the tRNAs correctly. Binds to ribosomes in a GTP-dependent manner. The protein is Elongation factor 4 of Alkaliphilus metalliredigens (strain QYMF).